The chain runs to 148 residues: MASKRILKELKDLQKDPPTSCSAGPVAEDMFHWQATIMGPSESPYAGGVFLVTIHFPPDYPFKPPKVAFRTKVFHPNINSNGSICLDILKEQWSPALTISKVLLSICSLLTDPNPDDPLVPEIAHMYKTDKNKYESTARSWTQKYAMG.

The UBC core domain maps to 1 to 147 (MASKRILKEL…ARSWTQKYAM (147 aa)). Residue Cys85 is the Glycyl thioester intermediate of the active site.

It belongs to the ubiquitin-conjugating enzyme family. In terms of assembly, interacts with CHIP and the E3 ubiquitin ligase BB. Associates with the E3 ubiquitin ligase JMJ24. In terms of tissue distribution, ubiquitously expressed with the highest levels in rosette leaves, roots and petals.

The enzyme catalyses S-ubiquitinyl-[E1 ubiquitin-activating enzyme]-L-cysteine + [E2 ubiquitin-conjugating enzyme]-L-cysteine = [E1 ubiquitin-activating enzyme]-L-cysteine + S-ubiquitinyl-[E2 ubiquitin-conjugating enzyme]-L-cysteine.. Its pathway is protein modification; protein ubiquitination. In terms of biological role, accepts the ubiquitin from the E1 complex and catalyzes its covalent attachment to other proteins. Mediates the selective degradation of short-lived and abnormal proteins. This is Ubiquitin-conjugating enzyme E2 10 from Arabidopsis thaliana (Mouse-ear cress).